The chain runs to 452 residues: Eukaryotic translation initiation factor 4B3 (452 aa).

An N-acetylalanine modification is found at Ala-2. The segment at 20-282 (EEHEAELKQQ…PSGGSRPRLV (263 aa)) is disordered. The segment covering 28–37 (QQPSPTNQKS) has biased composition (polar residues). A compositionally biased stretch (basic and acidic residues) spans 98–110 (PRERSAEELDRSK). The span at 111–122 (LGGGFRSYGGGR) shows a compositional bias: gly residues. Residues 126 to 136 (ESSSSRWGSSR) show a composition bias toward low complexity. Over residues 137–156 (VSEDGERRGGGFNRDREPSR) the composition is skewed to basic and acidic residues. 2 short sequence motifs (nuclear localization signal) span residues 172-179 (AKKPISGN) and 215-222 (PRRFVSSN). The segment covering 227 to 243 (DRFEKRGSFESLSRNRD) has biased composition (basic and acidic residues). Ser-234, Ser-270, and Ser-300 each carry phosphoserine. The segment covering 265-280 (GAANGSPPPSGGSRPR) has biased composition (low complexity). Positions 349 to 452 (AAMEKPNEKS…AKKEETEDKI (104 aa)) are disordered. Over residues 369–386 (GRKDEERIERSWRKSTEH) the composition is skewed to basic and acidic residues. The span at 387–397 (SEEDAQEEEPA) shows a compositional bias: acidic residues. Basic and acidic residues-rich tracts occupy residues 400 to 419 (GAKK…KKEE) and 441 to 452 (EEAKKEETEDKI).

The protein belongs to the eIF-4 subunit B family. Homodimer. Nonspherical monomer. mRNA-discriminating component of initiation complexes. Interacts with MAD2. Post-translationally, phosphorylated.

It localises to the nucleus. Functionally, promotes the eIF4F and eIF4A RNA-dependent ATP-hydrolysis activity with different efficiency depending on mRNAs, thus providing mRNA discrimination during initiation of translation. This Arabidopsis thaliana (Mouse-ear cress) protein is Eukaryotic translation initiation factor 4B3.